The sequence spans 338 residues: Protein UL141 (338 aa).

Residues 1-25 (MCRRESLRTLPWLFWVLLSCPRLLE) form the signal peptide. Topologically, residues 37 to 278 (DIAEKMWAEN…DTGMSPWATR (242 aa)) are extracellular. N-linked (GlcNAc...) asparagine; by host glycosylation is found at N117, N132, and N147. A helical transmembrane segment spans residues 279–299 (GIAAFLGFWSIFTVCFLCYLC). Topologically, residues 300 to 338 (YLQCCGHWCPTPGRGRRGGEGYRRLPTYDSYPGVKKMKR) are cytoplasmic.

In terms of assembly, interacts with human PVR. Interacts with human TNFRSF10A and TNFRSF10B. Forms a homodimer that engages two TNFRSF10B monomers.

It localises to the host endoplasmic reticulum membrane. In terms of biological role, evasion of NK cell killing. Blocks surface expression of PVR which is a ligand for NK cell-activating receptors. Binds human PVR in the endoplasmic reticulum and prevents its maturation and transport to the cell surface. Targets also the natural killer cell activating ligand NECTIN2 for proteasome-mediated degradation. Additionally promotes intracellular retention of TNFRSF10A/TRAIL-R1 and TNFRSF10B/TRAIL-R2 and thus down-regulates their cell surface expression. This Human cytomegalovirus (strain Merlin) (HHV-5) protein is Protein UL141 (UL141).